The primary structure comprises 183 residues: Inner membrane-spanning protein YciB (183 aa).

The next 5 membrane-spanning stretches (helical) occupy residues 22–44 (VQAA…RILF), 53–73 (IVGL…DLAF), 76–96 (WKVT…QYVF), 121–141 (LGWA…SQLF), and 153–173 (GFTG…YPYI).

This sequence belongs to the YciB family.

It localises to the cell inner membrane. Its function is as follows. Plays a role in cell envelope biogenesis, maintenance of cell envelope integrity and membrane homeostasis. The polypeptide is Inner membrane-spanning protein YciB (Haemophilus ducreyi (strain 35000HP / ATCC 700724)).